Here is a 303-residue protein sequence, read N- to C-terminus: Proteasome subunit beta (303 aa).

A propeptide spans 1 to 67 (MTWQFPDRLS…SGGTGQLPHG (67 aa)) (removed in mature form; by autocatalysis). Threonine 68 functions as the Nucleophile in the catalytic mechanism.

It belongs to the peptidase T1B family. The 20S proteasome core is composed of 14 alpha and 14 beta subunits that assemble into four stacked heptameric rings, resulting in a barrel-shaped structure. The two inner rings, each composed of seven catalytic beta subunits, are sandwiched by two outer rings, each composed of seven alpha subunits. The catalytic chamber with the active sites is on the inside of the barrel. Has a gated structure, the ends of the cylinder being occluded by the N-termini of the alpha-subunits. Is capped by the proteasome-associated ATPase, ARC.

It is found in the cytoplasm. It carries out the reaction Cleavage of peptide bonds with very broad specificity.. It functions in the pathway protein degradation; proteasomal Pup-dependent pathway. With respect to regulation, the formation of the proteasomal ATPase ARC-20S proteasome complex, likely via the docking of the C-termini of ARC into the intersubunit pockets in the alpha-rings, may trigger opening of the gate for substrate entry. Interconversion between the open-gate and close-gate conformations leads to a dynamic regulation of the 20S proteasome proteolysis activity. Functionally, component of the proteasome core, a large protease complex with broad specificity involved in protein degradation. This Mycobacterium avium (strain 104) protein is Proteasome subunit beta.